A 291-amino-acid polypeptide reads, in one-letter code: MKTGRIVKSISGVYQVDVNGERFNTKPRGLFRKKKFSPVVGDIVEFEVQNINEGYIHQVFERKNELKRPPVSNIDTLVIVMSAVEPNFSTQLLDRFLVIAHSYQLNARVLVTKKDKTPIEKQFEINELLKIYENIGYETEFIGNDDDRKKIVEAWPAGLIVLSGQSGVGKSTFLNHYRPELNLETNDISKSLNRGKHTTRHVELFERQNGYIADTPGFSALDFDHIDKDEIKDYFLELNRYGETCKFRNCNHIKEPNCNVKHQLEIGNIAQFRYDHYLQLFNEISNRKVRY.

The CP-type G domain occupies 63 to 221; sequence KNELKRPPVS…IADTPGFSAL (159 aa). GTP contacts are provided by residues 112–115 and 164–172; these read TKKD and GQSGVGKST. Cys-245, Cys-250, His-252, and Cys-258 together coordinate Zn(2+).

Belongs to the TRAFAC class YlqF/YawG GTPase family. RsgA subfamily. As to quaternary structure, monomer. Associates with 30S ribosomal subunit, binds 16S rRNA. Requires Zn(2+) as cofactor.

Its subcellular location is the cytoplasm. Its function is as follows. One of several proteins that assist in the late maturation steps of the functional core of the 30S ribosomal subunit. Helps release RbfA from mature subunits. May play a role in the assembly of ribosomal proteins into the subunit. Circularly permuted GTPase that catalyzes slow GTP hydrolysis, GTPase activity is stimulated by the 30S ribosomal subunit. The sequence is that of Small ribosomal subunit biogenesis GTPase RsgA from Staphylococcus aureus (strain Mu50 / ATCC 700699).